A 435-amino-acid polypeptide reads, in one-letter code: GTPase Obg (435 aa).

One can recognise an Obg domain in the interval 6–164 (ADFVDRVKIF…RWLELELKIL (159 aa)). The OBG-type G domain maps to 165 to 335 (ADVGLVGYPN…LVSKLASIVR (171 aa)). GTP is bound by residues 171-178 (GYPNVGKS), 196-200 (FTTLI), 217-220 (DIPG), 287-290 (NKID), and 316-318 (SAV). Positions 178 and 198 each coordinate Mg(2+). The OCT domain maps to 357 to 435 (RRLPEKFHLE…IGDFEFEYRE (79 aa)).

The protein belongs to the TRAFAC class OBG-HflX-like GTPase superfamily. OBG GTPase family. Monomer. The cofactor is Mg(2+).

It localises to the cytoplasm. Functionally, an essential GTPase which binds GTP, GDP and possibly (p)ppGpp with moderate affinity, with high nucleotide exchange rates and a fairly low GTP hydrolysis rate. Plays a role in control of the cell cycle, stress response, ribosome biogenesis and in those bacteria that undergo differentiation, in morphogenesis control. The protein is GTPase Obg of Thermotoga maritima (strain ATCC 43589 / DSM 3109 / JCM 10099 / NBRC 100826 / MSB8).